The primary structure comprises 149 residues: Large ribosomal subunit protein bL9 (149 aa).

The protein belongs to the bacterial ribosomal protein bL9 family.

Its function is as follows. Binds to the 23S rRNA. The polypeptide is Large ribosomal subunit protein bL9 (Tolumonas auensis (strain DSM 9187 / NBRC 110442 / TA 4)).